Consider the following 371-residue polypeptide: Peptide chain release factor 2 (371 aa).

The residue at position 253 (glutamine 253) is an N5-methylglutamine.

The protein belongs to the prokaryotic/mitochondrial release factor family. In terms of processing, methylated by PrmC. Methylation increases the termination efficiency of RF2.

It is found in the cytoplasm. Functionally, peptide chain release factor 2 directs the termination of translation in response to the peptide chain termination codons UGA and UAA. This Mycobacterium sp. (strain KMS) protein is Peptide chain release factor 2.